Here is a 406-residue protein sequence, read N- to C-terminus: Acetate kinase (406 aa).

A Mg(2+)-binding site is contributed by Asn10. ATP is bound at residue Lys17. Arg92 is a substrate binding site. The active-site Proton donor/acceptor is Asp151. Residues 211 to 215 (HLGSG), 286 to 288 (DFR), and 335 to 339 (GIGEN) contribute to the ATP site. Glu389 contacts Mg(2+).

It belongs to the acetokinase family. As to quaternary structure, homodimer. Mg(2+) serves as cofactor. Mn(2+) is required as a cofactor.

Its subcellular location is the cytoplasm. It catalyses the reaction acetate + ATP = acetyl phosphate + ADP. Its pathway is metabolic intermediate biosynthesis; acetyl-CoA biosynthesis; acetyl-CoA from acetate: step 1/2. In terms of biological role, catalyzes the formation of acetyl phosphate from acetate and ATP. Can also catalyze the reverse reaction. This Buchnera aphidicola subsp. Cinara cedri (strain Cc) protein is Acetate kinase.